A 279-amino-acid chain; its full sequence is Putative F-box protein At1g50880 (279 aa).

One can recognise an F-box domain in the interval 19-69 (SSSMSSIPLDVTSKILAKLPAKSVLRARCVSKQWSSISTDPYFISNMFPKQ).

The sequence is that of Putative F-box protein At1g50880 from Arabidopsis thaliana (Mouse-ear cress).